Here is a 185-residue protein sequence, read N- to C-terminus: Sulfopyruvate decarboxylase subunit beta (185 aa).

Belongs to the TPP enzyme family. In terms of assembly, heterododecamer composed of 6 subunits alpha and 6 subunits beta. The cofactor is thiamine diphosphate.

The catalysed reaction is 3-sulfopyruvate + H(+) = sulfoacetaldehyde + CO2. The protein operates within cofactor biosynthesis; coenzyme M biosynthesis; sulfoacetaldehyde from phosphoenolpyruvate and sulfite: step 4/4. Involved in the biosynthesis of the coenzyme M (2-mercaptoethanesulfonic acid). Catalyzes the decarboxylation of sulfopyruvate to sulfoacetaldehyde. This chain is Sulfopyruvate decarboxylase subunit beta, found in Methanococcus maripaludis (strain DSM 14266 / JCM 13030 / NBRC 101832 / S2 / LL).